A 344-amino-acid polypeptide reads, in one-letter code: Arginine N-succinyltransferase (344 aa).

Leu125 is a binding site for succinyl-CoA. The active-site Proton donor is His229.

Belongs to the arginine N-succinyltransferase family.

The catalysed reaction is succinyl-CoA + L-arginine = N(2)-succinyl-L-arginine + CoA + H(+). The protein operates within amino-acid degradation; L-arginine degradation via AST pathway; L-glutamate and succinate from L-arginine: step 1/5. Catalyzes the transfer of succinyl-CoA to arginine to produce N(2)-succinylarginine. The polypeptide is Arginine N-succinyltransferase (Shigella flexneri serotype 5b (strain 8401)).